Consider the following 145-residue polypeptide: ATP synthase epsilon chain (145 aa).

Basic and acidic residues predominate over residues 93–104 (AEAEKARARAQE). The segment at 93–113 (AEAEKARARAQEALKNPDASK) is disordered.

This sequence belongs to the ATPase epsilon chain family. As to quaternary structure, F-type ATPases have 2 components, CF(1) - the catalytic core - and CF(0) - the membrane proton channel. CF(1) has five subunits: alpha(3), beta(3), gamma(1), delta(1), epsilon(1). CF(0) has three main subunits: a, b and c.

The protein resides in the cell inner membrane. Functionally, produces ATP from ADP in the presence of a proton gradient across the membrane. This is ATP synthase epsilon chain from Francisella philomiragia subsp. philomiragia (strain ATCC 25017 / CCUG 19701 / FSC 153 / O#319-036).